Consider the following 689-residue polypeptide: Sodium-dependent phosphate transport protein 2B (689 aa).

The tract at residues 1–41 (MAPWPELGDAQPNPDKYLEGAAGQQPTAPDKSKETNKNNTE) is disordered. At 1 to 100 (MAPWPELGDA…LCVFQGIGRL (100 aa)) the chain is on the cytoplasmic side. Residues 101 to 121 (ILLLGFLYFFVCSLDILSSAF) traverse the membrane as a helical segment. Residues 122–135 (QLVGGKMAGQFFSN) lie on the Extracellular side of the membrane. A helical membrane pass occupies residues 136 to 156 (SSIMSNPLLGLVIGVLVTVLV). Residues 157 to 212 (QSSSTSTSIVVSMVSSSLLTVRAAIPIIMGANIGTSITNTIVALMQVGDRSEFRRA) are Cytoplasmic-facing. A helical transmembrane segment spans residues 213–233 (FAGATVHDFFNWLSVLVLLPV). Residues 234–362 (EVATHYLEII…FVNFHLPDLA (129 aa)) lie on the Extracellular side of the membrane. N-linked (GlcNAc...) asparagine glycosylation is found at N294, N307, and N320. An intrachain disulfide couples C302 to C349. A helical transmembrane segment spans residues 363–383 (VGTILLILSLLVLCGCLIMIV). Residues 384–407 (KILGSVLKGQVATVIKKTINTDFP) are Cytoplasmic-facing. Residues 408–428 (FPFAWLTGYLAILVGAGMTFI) traverse the membrane as a helical segment. Residues 429–485 (VQSSSVFTSALTPLIGIGVITIERAYPLTLGSNIGTTTTAILAALASPGNALRSSLQ) are Extracellular-facing. The chain crosses the membrane as a helical span at residues 486–506 (IALCHFFFNISGILLWYPIPF). The Cytoplasmic portion of the chain corresponds to 507 to 525 (TRLPIRMAKGLGNISAKYR). A helical transmembrane segment spans residues 526-546 (WFAVFYLIIFFFLIPLTVFGL). The Extracellular portion of the chain corresponds to 547–552 (SLAGWR). A helical membrane pass occupies residues 553-573 (VLVGVGVPVVFIIILVLCLRL). Residues 574-687 (LQSRCPRVLP…PASDSKTECT (114 aa)) lie on the Cytoplasmic side of the membrane.

Belongs to the SLC34A transporter family.

It is found in the apical cell membrane. The catalysed reaction is 3 Na(+)(out) + phosphate(out) = 3 Na(+)(in) + phosphate(in). Functionally, involved in actively transporting phosphate into cells via Na(+) cotransport. In Pongo abelii (Sumatran orangutan), this protein is Sodium-dependent phosphate transport protein 2B (SLC34A2).